The primary structure comprises 190 residues: MSRPLVFVTGNAKKLEEVVTILGNNFPAKLVSQSVDLPELQGEIEDICKKKCLEAAKIVQGPVLVEDTCLCFNALGGLPGPYIKWFLEKLGPEGLSKLLTGWEDKTATAICTIAYSSGDQNEDVILFQGQTTGKIVEPRGTRIFGWDPCFLPDGYDQTYAEMPKSEKNKISHRTKAVEKLRTYFTEKLNF.

Position 9 to 14 (9 to 14 (TGNAKK)) interacts with ITP. Glutamate 39 is a binding site for Mg(2+). ITP contacts are provided by residues lysine 51, 67–68 (DT), lysine 84, 144–147 (FGWD), lysine 167, and 172–173 (HR).

It belongs to the HAM1 NTPase family. Homodimer. Mg(2+) serves as cofactor. It depends on Mn(2+) as a cofactor.

The protein localises to the cytoplasm. The catalysed reaction is ITP + H2O = IMP + diphosphate + H(+). It carries out the reaction dITP + H2O = dIMP + diphosphate + H(+). It catalyses the reaction XTP + H2O = XMP + diphosphate + H(+). Functionally, pyrophosphatase that hydrolyzes non-canonical purine nucleotides such as inosine triphosphate (ITP), deoxyinosine triphosphate (dITP) or xanthosine 5'-triphosphate (XTP) to their respective monophosphate derivatives. The enzyme does not distinguish between the deoxy- and ribose forms. Probably excludes non-canonical purines from RNA and DNA precursor pools, thus preventing their incorporation into RNA and DNA and avoiding chromosomal lesions. The protein is Inosine triphosphate pyrophosphatase of Pediculus humanus subsp. corporis (Body louse).